The chain runs to 298 residues: Cyclin-D4-2 (298 aa).

This sequence belongs to the cyclin family. Cyclin D subfamily. As to quaternary structure, interacts with CDKA-1 to form a kinase complex.

May promote cell division. The protein is Cyclin-D4-2 (CYCD4-2) of Arabidopsis thaliana (Mouse-ear cress).